The following is a 49-amino-acid chain: DNA-directed RNA polymerase subunit Rpo12 (49 aa).

Zn(2+) is bound by residues C11, C27, and C30.

The protein belongs to the archaeal Rpo12/eukaryotic RPC10 RNA polymerase subunit family. In terms of assembly, part of the RNA polymerase complex. Zn(2+) is required as a cofactor.

The protein resides in the cytoplasm. The enzyme catalyses RNA(n) + a ribonucleoside 5'-triphosphate = RNA(n+1) + diphosphate. Its function is as follows. DNA-dependent RNA polymerase (RNAP) catalyzes the transcription of DNA into RNA using the four ribonucleoside triphosphates as substrates. The chain is DNA-directed RNA polymerase subunit Rpo12 from Pyrococcus horikoshii (strain ATCC 700860 / DSM 12428 / JCM 9974 / NBRC 100139 / OT-3).